A 199-amino-acid polypeptide reads, in one-letter code: Holliday junction branch migration complex subunit RuvA (199 aa).

The tract at residues 1–64 (MIALLTGKLA…EDAINLYGFR (64 aa)) is domain I. The segment at 65 to 143 (TQQEKELFQL…KLGLAQPQAG (79 aa)) is domain II. The tract at residues 144 to 148 (GTTAP) is flexible linker. Residues 149–199 (AKQEIRDDVLSALINLGYKEAVVQKALAELKVTEDATVELVLKQALKILMK) form a domain III region.

This sequence belongs to the RuvA family. In terms of assembly, homotetramer. Forms an RuvA(8)-RuvB(12)-Holliday junction (HJ) complex. HJ DNA is sandwiched between 2 RuvA tetramers; dsDNA enters through RuvA and exits via RuvB. An RuvB hexamer assembles on each DNA strand where it exits the tetramer. Each RuvB hexamer is contacted by two RuvA subunits (via domain III) on 2 adjacent RuvB subunits; this complex drives branch migration. In the full resolvosome a probable DNA-RuvA(4)-RuvB(12)-RuvC(2) complex forms which resolves the HJ.

The protein localises to the cytoplasm. In terms of biological role, the RuvA-RuvB-RuvC complex processes Holliday junction (HJ) DNA during genetic recombination and DNA repair, while the RuvA-RuvB complex plays an important role in the rescue of blocked DNA replication forks via replication fork reversal (RFR). RuvA specifically binds to HJ cruciform DNA, conferring on it an open structure. The RuvB hexamer acts as an ATP-dependent pump, pulling dsDNA into and through the RuvAB complex. HJ branch migration allows RuvC to scan DNA until it finds its consensus sequence, where it cleaves and resolves the cruciform DNA. The polypeptide is Holliday junction branch migration complex subunit RuvA (Citrifermentans bemidjiense (strain ATCC BAA-1014 / DSM 16622 / JCM 12645 / Bem) (Geobacter bemidjiensis)).